Reading from the N-terminus, the 381-residue chain is Trans-enoyl reductase iliB (381 aa).

50–53 (VDGK) provides a ligand contact to NADP(+). Substrate is bound at residue 145 to 152 (ATLATVGL). NADP(+)-binding positions include 213 to 216 (SPGS), Tyr231, and 278 to 279 (LD). Residue 298–302 (TYTQF) participates in substrate binding. Residue 367–368 (IS) participates in NADP(+) binding.

This sequence belongs to the zinc-containing alcohol dehydrogenase family. In terms of assembly, monomer.

The catalysed reaction is N-[(4E,6E,10S,12Z,14E)-6,10-dimethyl-3-oxohexadeca-4,6,12,14-tetraenoyl]-L-tyrosyl-[ACP] = (3E,5S)-3-[(2E,4E,8S,10E,12Z)-1-hydroxy-4,8-dimethyltetradeca-2,4,10,12-tetraen-1-ylidene]-5-[(4-hydroxyphenyl)methyl]pyrrolidine-2,4-dione + holo-[ACP] + H(+). It participates in mycotoxin biosynthesis. Its function is as follows. Trans-enoyl reductase; part of the gene cluster that mediates the biosynthesis of ilicicolin H, a 4-hydroxy-2-pyridonealkaloid that has potent and broad antifungal activities by inhibiting the mitochondrial respiration chain. IliB collaborates with the hybrid PKS-NRPS synthetase iliA to assemble the backbone of ilicicolin H. The PKS portion of iliA and trans-acting enoyl reductase iliB work together to construct an octaketide, and two methyl groups are introduced by the MT domain of iliA during the chain assembly. The nascent chain is then condensed with tyrosine, catalyzed by the iliA C domain, and the resulting PKS-NRPS hybrid is offloaded by the iliA RED domain to form an advanced tetramic acid intermediate. The biosynthesis of ilicicolin H starts with formation of the tetramic acid by the hybrid PKS-NRPS synthetase iliA with the partnering trans-enoyl reductase iliB since iliA lacks a designated enoylreductase (ER) domain. The cytochrome P450 monooxygenase iliC then catalyzes the ring expansion of the tetramate to the acyclic 2-pyridone. The pericyclase iliD further converts the acyclic 2-pyridone into 8-epi-ilicicolin H. 8-epi-ilicicolin H might then spontaneously convert to ilicicolin H since ilicicolin H is produced in the absence of the epimerase iliE, in contrast to what was observed for the Talaromyces variabilis ilicolin H biosynthetic pathway. The sequence is that of Trans-enoyl reductase iliB from Neonectria sp. (strain DH2).